The primary structure comprises 296 residues: Protoheme IX farnesyltransferase (296 aa).

Residues 1-9 (MMFKQYLQV) lie on the Cytoplasmic side of the membrane. A helical transmembrane segment spans residues 10 to 28 (TKPGIIFGNLISVIGGFLL). Over 29–37 (ASKGSIDYP) the chain is Periplasmic. Residues 38–56 (LFIYTLVGVSLVVASGCVF) form a helical membrane-spanning segment. The Cytoplasmic portion of the chain corresponds to 57-78 (NNYIDRDIDRKMERTKNRVLVK). A helical membrane pass occupies residues 79–97 (GLISPAVSLVYATLLGIAG). The Periplasmic segment spans residues 98-107 (FMLLWFGANP). A helical membrane pass occupies residues 108–126 (LACWLGVMGFVVYVGVYSL). Topologically, residues 127–197 (YMKRHSVYGT…YQAANIPVLP (71 aa)) are cytoplasmic. Residues 198–216 (VVKGISVAKNHITLYIIAF) form a helical membrane-spanning segment. The Periplasmic portion of the chain corresponds to 217–228 (AVATLMLSLGGY). The helical transmembrane segment at 229–247 (AGYKYLVVAAAVSVWWLGM) threads the bilayer. Topologically, residues 248–268 (ALRGYKVADDRIWARKLFGFS) are cytoplasmic. Residues 269–287 (IIAITALSVMMSVDFMVPD) form a helical membrane-spanning segment. The Periplasmic segment spans residues 288–296 (SHTLLAAVW).

It belongs to the UbiA prenyltransferase family. Protoheme IX farnesyltransferase subfamily.

It is found in the cell inner membrane. It catalyses the reaction heme b + (2E,6E)-farnesyl diphosphate + H2O = Fe(II)-heme o + diphosphate. Its pathway is porphyrin-containing compound metabolism; heme O biosynthesis; heme O from protoheme: step 1/1. Functionally, converts heme B (protoheme IX) to heme O by substitution of the vinyl group on carbon 2 of heme B porphyrin ring with a hydroxyethyl farnesyl side group. This is Protoheme IX farnesyltransferase from Escherichia coli O139:H28 (strain E24377A / ETEC).